Here is a 155-residue protein sequence, read N- to C-terminus: Ribonuclease H (155 aa).

The region spanning 1 to 142 (MLKQVEIFTD…CDVLARDAAS (142 aa)) is the RNase H type-1 domain. Residues Asp-10, Glu-48, Asp-70, and Asp-134 each contribute to the Mg(2+) site.

It belongs to the RNase H family. In terms of assembly, monomer. It depends on Mg(2+) as a cofactor.

Its subcellular location is the cytoplasm. The catalysed reaction is Endonucleolytic cleavage to 5'-phosphomonoester.. Endonuclease that specifically degrades the RNA of RNA-DNA hybrids. The chain is Ribonuclease H from Serratia proteamaculans (strain 568).